Here is an 859-residue protein sequence, read N- to C-terminus: Collagen alpha-1(II) chain (859 aa).

The tract at residues 1–607 is disordered; sequence LQGLPGKDGE…LGQTEKGPDP (607 aa). 4-hydroxyproline is present on residues Pro31 and Pro40. Pro42 bears the 3-hydroxyproline mark. Residues Pro43 and Pro46 each carry the 4-hydroxyproline modification. Residues 78–121 show a composition bias toward low complexity; sequence ERGSPGAQGLQGPRGLPGTPGTDGPKGATGPAGPNGAQGPPGLQ. The segment covering 136-147 has biased composition (basic and acidic residues); that stretch reads KGDRGDVGEKGP. Low complexity-rich tracts occupy residues 204–220 and 249–277; these read PAGF…PGAK and PTGV…AGRV. Residue Pro279 is modified to 3-hydroxyproline. A compositionally biased stretch (pro residues) spans 279–292; that stretch reads PPGPNGNPGPPGPP. 4-hydroxyproline occurs at positions 280, 286, and 292. Residues 306-321 are compositionally biased toward low complexity; it reads DAGPPGRAGDPGLQGP. A compositionally biased stretch (basic and acidic residues) spans 487–501; that stretch reads RGDKGETGEAGERGL. The tract at residues 491–586 is triple-helical region; it reads GETGEAGERG…PGPPGPPGPP (96 aa). Pro516 bears the 3-hydroxyproline mark. Over residues 520-529 the composition is skewed to low complexity; it reads SGDQGAAGPA. 4-hydroxyproline is present on Pro553. Pro558 carries the 3-hydroxyproline modification. 4-hydroxyproline is present on Pro559. Pro residues predominate over residues 570-586; it reads PAGPPGNPGPPGPPGPP. Pro573 carries the post-translational modification 3-hydroxyproline. 2 positions are modified to 4-hydroxyproline: Pro574 and Pro577. 3-hydroxyproline is present on Pro579. 4-hydroxyproline occurs at positions 580 and 583. Position 585 is a 3-hydroxyproline (Pro585). 4-hydroxyproline is present on Pro586. A nonhelical region (C-terminal) region spans residues 587-613; sequence GTGIDMSAFAGLGQTEKGPDPIRYMRA. A propeptide spans 614 to 859 (C-terminal propeptide); it reads DEAAGGLRQH…GVDIGPVCFL (246 aa). The Fibrillar collagen NC1 domain maps to 625-859; it reads VEVDATLKSL…GVDIGPVCFL (235 aa). 3 disulfides stabilise this stretch: Cys655/Cys687, Cys695/Cys857, and Cys765/Cys810. Ca(2+) contacts are provided by Asp673, Asn675, Gln676, Cys678, and Asp681. A glycan (N-linked (GlcNAc...) asparagine) is linked at Asn760.

This sequence belongs to the fibrillar collagen family. As to quaternary structure, homotrimers of alpha 1(II) chains. Post-translationally, contains mostly 4-hydroxyproline. Prolines at the third position of the tripeptide repeating unit (G-X-P) are 4-hydroxylated in some or all of the chains. Contains 3-hydroxyproline at a few sites. This modification occurs on the first proline residue in the sequence motif Gly-Pro-Hyp, where Hyp is 4-hydroxyproline. In terms of processing, lysine residues at the third position of the tripeptide repeating unit (G-X-Y) are 5-hydroxylated in some or all of the chains. Post-translationally, O-glycosylated on hydroxylated lysine residues. The O-linked glycan consists of a Glc-Gal disaccharide.

It localises to the secreted. The protein localises to the extracellular space. Its subcellular location is the extracellular matrix. Functionally, type II collagen is specific for cartilaginous tissues. It is essential for the normal embryonic development of the skeleton, for linear growth and for the ability of cartilage to resist compressive forces. This Gallus gallus (Chicken) protein is Collagen alpha-1(II) chain.